The chain runs to 153 residues: Ribosome maturation factor RimP (153 aa).

This sequence belongs to the RimP family.

It localises to the cytoplasm. Required for maturation of 30S ribosomal subunits. The polypeptide is Ribosome maturation factor RimP (Trichormus variabilis (strain ATCC 29413 / PCC 7937) (Anabaena variabilis)).